Consider the following 150-residue polypeptide: Group IIC secretory phospholipase A2 (150 aa).

An N-terminal signal peptide occupies residues 1-20 (MKGIAVFLVFIFCWTTSTLS). Disulfide bonds link C46/C143, C48/C64, C63/C121, C69/C150, C70/C114, C79/C107, C97/C112, and C99/C105. Ca(2+) is bound by residues Y47, G49, and G51. H67 is an active-site residue. Residue D68 participates in Ca(2+) binding. N-linked (GlcNAc...) asparagine glycosylation is present at N92. D115 is a catalytic residue.

This sequence belongs to the phospholipase A2 family. It depends on Ca(2+) as a cofactor.

The protein resides in the secreted. It carries out the reaction a 1,2-diacyl-sn-glycero-3-phosphocholine + H2O = a 1-acyl-sn-glycero-3-phosphocholine + a fatty acid + H(+). Functionally, PA2 catalyzes the calcium-dependent hydrolysis of the 2-acyl groups in 3-sn-phosphoglycerides. The sequence is that of Group IIC secretory phospholipase A2 (Pla2g2c) from Rattus norvegicus (Rat).